Consider the following 1350-residue polypeptide: ABC transporter G family member 45 (1350 aa).

Positions 1-23 (MAAAVELTGDGGTTAETRWLSPP) are disordered. The ABC transporter 1 domain maps to 85–357 (AACAHMCTTR…FETMGFKCPS (273 aa)). Residue 118–125 (GAPGSGKT) coordinates ATP. Residues 434–647 (NIFKACFSRE…AQNAVALNEF (214 aa)) form the ABC transmembrane type-2 1 domain. 6 consecutive transmembrane segments (helical) span residues 453–473 (VHIFKTIQITVLALVISTLFL), 491–511 (ALFMAVVIVNFNGMTEIAMTI), 523–543 (ILALPGWALLSSVFLLSLPIS), 557–577 (VIGYAPSFVRFIQHFVVLFAM), 597–617 (MANMLGTAALIAIYILGGFVI), and 683–703 (ICVSILFGFSLVFNILSIFAL). In terms of domain architecture, ABC transporter 2 spans 749 to 1001 (LVFDHINYFV…NMIKYFEAIP (253 aa)). 794–801 (GITGAGKT) lines the ATP pocket. The ABC transmembrane type-2 2 domain occupies 1074–1288 (AQCMACLWKQ…TVYGLMFSQL (215 aa)). A run of 7 helical transmembrane segments spans residues 1099-1119 (INTFAVSIMFGIVFWKIGSTI), 1126-1146 (FNILGVVYGSALFLGFMNCSI), 1181-1201 (LPYMFVQVFIFSAIVYPMIGF), 1208-1228 (FFWFALYMVLSFLYYTLYGMM), 1238-1258 (IAAGLSFLIFIFWNVFSGFII), 1269-1289 (WVYWANPAAWTVYGLMFSQLG), and 1322-1342 (LVTSLHVAIIALFTFLFFLSI).

Belongs to the ABC transporter superfamily. ABCG family. PDR (TC 3.A.1.205) subfamily.

Its subcellular location is the membrane. Functionally, may be a general defense protein. This chain is ABC transporter G family member 45, found in Oryza sativa subsp. japonica (Rice).